Reading from the N-terminus, the 212-residue chain is Thymidylate kinase (212 aa).

Residue 7–14 participates in ATP binding; that stretch reads GIEGSGKS.

This sequence belongs to the thymidylate kinase family.

It catalyses the reaction dTMP + ATP = dTDP + ADP. In terms of biological role, phosphorylation of dTMP to form dTDP in both de novo and salvage pathways of dTTP synthesis. This Oleidesulfovibrio alaskensis (strain ATCC BAA-1058 / DSM 17464 / G20) (Desulfovibrio alaskensis) protein is Thymidylate kinase.